Consider the following 100-residue polypeptide: Integration host factor subunit alpha 2 (100 aa).

The protein belongs to the bacterial histone-like protein family. Heterodimer of an alpha and a beta chain.

Its function is as follows. This protein is one of the two subunits of integration host factor, a specific DNA-binding protein that functions in genetic recombination as well as in transcriptional and translational control. This Dechloromonas aromatica (strain RCB) protein is Integration host factor subunit alpha 2.